A 342-amino-acid chain; its full sequence is Ribosomal RNA small subunit methyltransferase C (342 aa).

This sequence belongs to the methyltransferase superfamily. RsmC family. In terms of assembly, monomer.

It is found in the cytoplasm. The catalysed reaction is guanosine(1207) in 16S rRNA + S-adenosyl-L-methionine = N(2)-methylguanosine(1207) in 16S rRNA + S-adenosyl-L-homocysteine + H(+). Specifically methylates the guanine in position 1207 of 16S rRNA in the 30S particle. This Salmonella paratyphi B (strain ATCC BAA-1250 / SPB7) protein is Ribosomal RNA small subunit methyltransferase C.